Reading from the N-terminus, the 105-residue chain is Probable tetrachloroethene reductive dehalogenase membrane anchor protein (105 aa).

3 helical membrane passes run 3–23 (IYDV…QYGI), 35–55 (IPLQ…LAWG), and 66–86 (AIGM…IITY).

It belongs to the PceB family.

It localises to the cell membrane. In terms of biological role, may act as a membrane anchor for the tetrachloroethene reductive dehalogenase PceA. The sequence is that of Probable tetrachloroethene reductive dehalogenase membrane anchor protein from Desulfitobacterium hafniense (Desulfitobacterium frappieri).